A 577-amino-acid chain; its full sequence is Insulin-like growth factor 2 mRNA-binding protein 1 (577 aa).

2 consecutive RRM domains span residues 2–75 and 81–156; these read NKLY…HSVP and RKIQ…YIPD. Residues Ser-12 and Ser-73 each carry the phosphoserine modification. Positions 156–190 are disordered; that stretch reads DEQITQGPENGRRGGFGSRGQPRQGSPVAAGAPAK. Ser-181 bears the Phosphoserine; by MTOR mark. KH domains are found at residues 195-260, 276-343, 405-470, and 487-553; these read DIPL…CKMI, EVPL…EQEI, QEMV…QGRI, and KLET…QRKI. The sufficient for nuclear export stretch occupies residues 312–323; the sequence is ISSLQDLTLYNP. Residues 485–495 are sufficient for nuclear export; the sequence is EVKLETHIRVP. A Phosphothreonine modification is found at Thr-528.

This sequence belongs to the RRM IMP/VICKZ family. In terms of assembly, can form homodimers and heterodimers with IGF2BP1 and IGF2BP3. Component of the coding region determinant (CRD)-mediated complex, composed of DHX9, HNRNPU, IGF2BP1, SYNCRIP and YBX1. Identified in a mRNP complex, at least composed of DHX9, DDX3X, ELAVL1, HNRNPU, IGF2BP1, ILF3, PABPC1, PCBP2, PTBP2, STAU1, STAU2, SYNCRIP and YBX1. Associates with mRNP complex. Interacts with FMR1. Component of a multisubunit autoregulatory RNP complex (ARC), at least composed of IGF2BP1, PABPC1 and CSDE1. Interacts with AGO1 and AGO2. Interacts, through domains KH3 and KH4, with PABPC1 in an RNA-independent manner. Component of a TAU mRNP complex, at least composed of IGF2BP1, ELAVL4 and G3BP. Interacts with ELAVL4 in an RNA-dependent manner. Associates with microtubules and polysomes. Interacts with ELAVL1 and MATR3. Post-translationally, phosphorylated at Ser-181 by mTORC2 cotranslationally, promoting binding to the 3'-UTR of IGF2 mRNA. In terms of tissue distribution, expressed in zygotes and blastocysts (at protein level). Expressed in brain, skeletal muscle, trophoblasts of placenta, oocytes and spermatogonia (at protein level). Expressed in testis and ovary. Following colon injury, expressed in the wound bed mesenchyme during the first phase of repair, probably by colonic mesenchymal stem cells (at protein level).

It is found in the nucleus. Its subcellular location is the cytoplasm. It localises to the perinuclear region. The protein resides in the P-body. The protein localises to the stress granule. It is found in the cell projection. Its subcellular location is the lamellipodium. It localises to the dendrite. The protein resides in the dendritic spine. The protein localises to the growth cone. It is found in the filopodium. Its subcellular location is the axon. Its function is as follows. RNA-binding factor that recruits target transcripts to cytoplasmic protein-RNA complexes (mRNPs). This transcript 'caging' into mRNPs allows mRNA transport and transient storage. It also modulates the rate and location at which target transcripts encounter the translational apparatus and shields them from endonuclease attacks or microRNA-mediated degradation. Preferentially binds to N6-methyladenosine (m6A)-containing mRNAs and increases their stability. Regulates localized beta-actin/ACTB mRNA translation, a crucial process for cell polarity, cell migration and neurite outgrowth. Co-transcriptionally associates with the ACTB mRNA in the nucleus. This binding involves a conserved 54-nucleotide element in the ACTB mRNA 3'-UTR, known as the 'zipcode'. The RNP thus formed is exported to the cytoplasm, binds to a motor protein and is transported along the cytoskeleton to the cell periphery. During transport, prevents ACTB mRNA from being translated into protein. When the RNP complex reaches its destination near the plasma membrane, IGF2BP1 is phosphorylated. This releases the mRNA, allowing ribosomal 40S and 60S subunits to assemble and initiate ACTB protein synthesis. Monomeric ACTB then assembles into the subcortical actin cytoskeleton. During neuronal development, key regulator of neurite outgrowth, growth cone guidance and neuronal cell migration, presumably through the spatiotemporal fine tuning of protein synthesis, such as that of ACTB. May regulate mRNA transport to activated synapses. Binds to the 3'-UTR of CD44 mRNA and stabilizes it, hence promotes cell adhesion and invadopodia formation in cancer cells. Binds to the oncofetal H19 transcript and regulates its localization. Binds to and stabilizes BTRC/FBW1A mRNA. Binds to the adenine-rich autoregulatory sequence (ARS) located in PABPC1 mRNA and represses its translation. PABPC1 mRNA-binding is stimulated by PABPC1 protein. Prevents BTRC/FBW1A mRNA degradation by disrupting microRNA-dependent interaction with AGO2. During cellular stress, such as oxidative stress or heat shock, stabilizes target mRNAs that are recruited to stress granules, including CD44, IGF2, MAPK4, MYC, PTEN, RAPGEF2 and RPS6KA5 transcripts. Interacts with GAP43 transcript and transports it to axons. Binds to the 3'-UTR of IGF2 mRNA by a mechanism of cooperative and sequential dimerization and regulates IGF2 mRNA subcellular localization and translation. Binds to MYC mRNA, in the coding region instability determinant (CRD) of the open reading frame (ORF), hence prevents MYC cleavage by endonucleases and possibly microRNA targeting to MYC-CRD. Binding to MYC mRNA is enhanced by m6A-modification of the CRD. Binds to and stabilizes ABCB1/MDR-1 mRNA. Binds to the neuron-specific TAU mRNA and regulates its localization. Plays a direct role in the transport and translation of transcripts required for axonal regeneration in adult sensory neurons. During interstinal wound repair, interacts with and stabilizes PTGS2 transcript. PTGS2 mRNA stabilization may be crucial for colonic mucosal wound healing. The chain is Insulin-like growth factor 2 mRNA-binding protein 1 (Igf2bp1) from Mus musculus (Mouse).